The chain runs to 305 residues: Serine/threonine-protein phosphatase PP1-delta (305 aa).

Mn(2+) contacts are provided by Asp62, His64, Asp90, and Asn122. Catalysis depends on His123, which acts as the Proton donor. His172 and His247 together coordinate Mn(2+).

The protein belongs to the PPP phosphatase family. As to expression, expressed in male germline including spermatocytes, spermatids and spermatozoa.

Its subcellular location is the chromosome. The protein localises to the cell projection. The protein resides in the pseudopodium. It localises to the cytoplasm. The catalysed reaction is O-phospho-L-seryl-[protein] + H2O = L-seryl-[protein] + phosphate. It carries out the reaction O-phospho-L-threonyl-[protein] + H2O = L-threonyl-[protein] + phosphate. In terms of biological role, probable phosphatase which plays a redundant role with gsp-4 in spermatogenesis by regulating sister chromatid segregation during meiosis. In addition, involved in sperm motility by controlling the dynamic disassembly of major sperm proteins (MSP) in the spermatozoan pseudopodium. This chain is Serine/threonine-protein phosphatase PP1-delta, found in Caenorhabditis elegans.